Here is a 536-residue protein sequence, read N- to C-terminus: Major facilitator superfamily domain-containing protein 4B (536 aa).

A run of 12 helical transmembrane segments spans residues 19-39 (LTYW…GPTI), 53-73 (ITWV…SGGA), 81-101 (ALLA…IIPL), 105-125 (VLLL…IDTI), 140-160 (IFLQ…PLIA), 211-231 (YAFW…FVLM), 297-317 (FFLI…IMGV), 341-361 (LNCI…PLSY), 366-386 (VHLL…LMIL), 391-411 (VFLF…FPCL), 428-448 (VLVT…GTLI), and 456-476 (FLVC…SVIL).

This sequence belongs to the major facilitator superfamily.

It is found in the membrane. This is Major facilitator superfamily domain-containing protein 4B from Danio rerio (Zebrafish).